Consider the following 352-residue polypeptide: Ion-translocating oxidoreductase complex subunit D (352 aa).

The next 5 helical transmembrane spans lie at 20 to 40, 42 to 62, 78 to 109, 123 to 143, and 148 to 168; these read IMLLVLLAAVPGIAAQLWFFG, GTLVQILLASVSALLAEALVL, ALLTGLLLAVSIPPLAPWWMVVLGTVFAVIIA, PAMIGYVVLLISFPVQMTSWL, and IAVNIPGFIDAIQVIFSGHTA. Position 187 is an FMN phosphoryl threonine (Thr187). 4 consecutive transmembrane segments (helical) span residues 214 to 234, 242 to 262, 267 to 287, and 301 to 318; these read ILAGAGWQWVNLAWLAGGVWL, WHIPLSFLVTLALCATLGWLF, LAAPQIHLLSGATMLGAFFIL, and LMFGALAGLLVWLIRSFG.

This sequence belongs to the NqrB/RnfD family. As to quaternary structure, the complex is composed of six subunits: RsxA, RsxB, RsxC, RsxD, RsxE and RsxG. It depends on FMN as a cofactor.

The protein localises to the cell inner membrane. Part of a membrane-bound complex that couples electron transfer with translocation of ions across the membrane. Required to maintain the reduced state of SoxR. The polypeptide is Ion-translocating oxidoreductase complex subunit D (Shigella flexneri serotype 5b (strain 8401)).